The sequence spans 110 residues: Ribonuclease H2 subunit C (110 aa).

Residues 45–69 (LKREKSATPSSSDNTTSNTFSNGAI) are disordered. Low complexity predominate over residues 51 to 66 (ATPSSSDNTTSNTFSN).

It belongs to the RNase H2 subunit C family. Highly divergent. In terms of assembly, the RNase 2 complex is a heterotrimer composed of the catalytic subunit RNH201 and of the non-catalytic subunits RNH202 and RNH203.

The protein localises to the cytoplasm. The protein resides in the nucleus. Functionally, non catalytic subunit of RNase H2, an endonuclease that specifically degrades the RNA of RNA:DNA hybrids. Participates in DNA replication, possibly by mediating the removal of lagging-strand Okazaki fragment RNA primers during DNA replication. Mediates the excision of single ribonucleotides from DNA:RNA duplexes. This Saccharomyces cerevisiae (strain ATCC 204508 / S288c) (Baker's yeast) protein is Ribonuclease H2 subunit C (RNH203).